A 477-amino-acid chain; its full sequence is Glutamate--tRNA ligase (477 aa).

Residues 8–18 (PSPTGTLHIGT) carry the 'HIGH' region motif. The short motif at 247–251 (KLSKR) is the 'KMSKS' region element. K250 contacts ATP.

Belongs to the class-I aminoacyl-tRNA synthetase family. Glutamate--tRNA ligase type 1 subfamily. As to quaternary structure, monomer.

The protein resides in the cytoplasm. It carries out the reaction tRNA(Glu) + L-glutamate + ATP = L-glutamyl-tRNA(Glu) + AMP + diphosphate. Catalyzes the attachment of glutamate to tRNA(Glu) in a two-step reaction: glutamate is first activated by ATP to form Glu-AMP and then transferred to the acceptor end of tRNA(Glu). In Synechococcus sp. (strain CC9902), this protein is Glutamate--tRNA ligase.